The primary structure comprises 425 residues: G protein-activated inward rectifier potassium channel 2 (425 aa).

The Cytoplasmic portion of the chain corresponds to 1-91; it reads MTMAKLTESM…IFTTLVDLKW (91 aa). Residues S18 and S25 each carry the phosphoserine modification. A helical membrane pass occupies residues 92 to 116; it reads RFNLLIFVMVYTVTWLFFGMIWWLI. Over 117–140 the chain is Extracellular; it reads AYIRGDMDHIEDPSWTPCVTNLNG. The helical; Pore-forming intramembrane region spans 141-152; it reads FVSAFLFSIETE. The segment at residues 153–159 is an intramembrane region (pore-forming); sequence TTIGYGY. Positions 154–159 match the Selectivity filter motif; it reads TIGYGY. Over 160–168 the chain is Extracellular; that stretch reads RVITDKCPE. Residues 169–190 form a helical membrane-spanning segment; it reads GIILLLIQSVLGSIVNAFMVGC. At 191–425 the chain is on the cytoplasmic side; that stretch reads MFVKISQPKK…VANLENESKV (235 aa). The tract at residues 392-425 is disordered; the sequence is NQHAELETEEEEKNPEELTERNGDVANLENESKV. The short motif at 422 to 425 is the PDZ-binding element; the sequence is ESKV.

The protein belongs to the inward rectifier-type potassium channel (TC 1.A.2.1) family. KCNJ6 subfamily. In terms of assembly, associates with KCNJ3/GIRK1 or KCNJ5/GRIK4 to form a G-protein-activated heteromultimer pore-forming unit. The resulting inward current is much larger. Interacts (via PDZ-binding motif) with SNX27 (via PDZ domain); the interaction is required for recycling to the plasma membrane when endocytosed and prevent degradation in lysosomes. Pancreatic beta cells and brain.

The protein localises to the membrane. It carries out the reaction K(+)(in) = K(+)(out). With respect to regulation, activated by phosphatidylinositol 4,5 biphosphate (PtdIns(4,5)P2). Its function is as follows. Inward rectifier potassium channels are characterized by a greater tendency to allow potassium to flow into the cell rather than out of it. Their voltage dependence is regulated by the concentration of extracellular potassium; as external potassium is raised, the voltage range of the channel opening shifts to more positive voltages. The inward rectification is mainly due to the blockage of outward current by internal magnesium. This potassium channel may be involved in the regulation of insulin secretion by glucose and/or neurotransmitters acting through G-protein-coupled receptors. In Rattus norvegicus (Rat), this protein is G protein-activated inward rectifier potassium channel 2 (Kcnj6).